A 425-amino-acid chain; its full sequence is Adenylosuccinate synthetase (425 aa).

GTP contacts are provided by residues 12–18 and 40–42; these read GDEGKGK and GHT. Asp13 functions as the Proton acceptor in the catalytic mechanism. The Mg(2+) site is built by Asp13 and Gly40. Residues 13–16, 38–41, Thr127, Arg141, Gln222, Thr237, and Arg301 contribute to the IMP site; these read DEGK and NAGH. His41 acts as the Proton donor in catalysis. Residue 297 to 303 coordinates substrate; sequence AVTGRPR. Residues Arg303, 329-331, and 411-413 contribute to the GTP site; these read KID and SVG.

This sequence belongs to the adenylosuccinate synthetase family. As to quaternary structure, homodimer. Mg(2+) is required as a cofactor.

The protein resides in the cytoplasm. The enzyme catalyses IMP + L-aspartate + GTP = N(6)-(1,2-dicarboxyethyl)-AMP + GDP + phosphate + 2 H(+). It functions in the pathway purine metabolism; AMP biosynthesis via de novo pathway; AMP from IMP: step 1/2. In terms of biological role, plays an important role in the de novo pathway of purine nucleotide biosynthesis. Catalyzes the first committed step in the biosynthesis of AMP from IMP. In Fusobacterium nucleatum, this protein is Adenylosuccinate synthetase.